Consider the following 755-residue polypeptide: Tryptophan 2-monooxygenase (755 aa).

Residues serine 247, glutamate 267, lysine 275, and arginine 295 each contribute to the FMN site. Arginine 295 contributes to the substrate binding site.

It belongs to the tryptophan 2-monooxygenase family. FMN serves as cofactor.

The enzyme catalyses L-tryptophan + O2 = indole-3-acetamide + CO2 + H2O. It functions in the pathway plant hormone metabolism; auxin biosynthesis. This Agrobacterium tumefaciens (strain Ach5) protein is Tryptophan 2-monooxygenase (tms1).